Consider the following 129-residue polypeptide: Succinate dehydrogenase subunit 3-1, mitochondrial (129 aa).

Residues 1-58 (MEKYHSNSRFAPFRDAPFALRGALGSSGSSFSSIDSLRRSSTLEQARGYTSRPLGAVR) constitute a mitochondrion transit peptide. Residues 25 to 35 (GSSGSSFSSID) show a composition bias toward low complexity. The disordered stretch occupies residues 25–80 (GSSGSSFSSIDSLRRSSTLEQARGYTSRPLGAVRPKMLPSGCRPLHTSHPLSAPVA). Histidine 87 is a binding site for heme. The helical transmembrane segment at 105–127 (IFGAALGAAIISIPLATKFSLMF) threads the bilayer.

As to quaternary structure, component of complex II composed of eight subunits in plants: four classical SDH subunits SDH1, SDH2, SDH3 and SDH4 (a flavoprotein (FP), an iron-sulfur protein (IP), and a cytochrome b composed of a large and a small subunit.), as well as four subunits unknown in mitochondria from bacteria and heterotrophic eukaryotes. The cofactor is heme.

The protein localises to the mitochondrion inner membrane. It participates in carbohydrate metabolism; tricarboxylic acid cycle. In terms of biological role, membrane-anchoring subunit of succinate dehydrogenase (SDH). The sequence is that of Succinate dehydrogenase subunit 3-1, mitochondrial from Oryza sativa subsp. japonica (Rice).